The chain runs to 226 residues: Thymidylate kinase (226 aa).

9–16 provides a ligand contact to ATP; it reads GPEGSGKS.

Belongs to the thymidylate kinase family.

It catalyses the reaction dTMP + ATP = dTDP + ADP. Its function is as follows. Phosphorylation of dTMP to form dTDP in both de novo and salvage pathways of dTTP synthesis. The chain is Thymidylate kinase from Roseiflexus sp. (strain RS-1).